We begin with the raw amino-acid sequence, 391 residues long: UPF0229 protein CLH_2838 (391 aa).

2 disordered regions span residues Met-1–Arg-23 and Val-75–Glu-107. Basic and acidic residues predominate over residues Gly-80 to Ser-92.

The protein belongs to the UPF0229 family.

This is UPF0229 protein CLH_2838 from Clostridium botulinum (strain Alaska E43 / Type E3).